We begin with the raw amino-acid sequence, 365 residues long: Cobalt-precorrin-5B C(1)-methyltransferase (365 aa).

This sequence belongs to the CbiD family.

The catalysed reaction is Co-precorrin-5B + S-adenosyl-L-methionine = Co-precorrin-6A + S-adenosyl-L-homocysteine. It participates in cofactor biosynthesis; adenosylcobalamin biosynthesis; cob(II)yrinate a,c-diamide from sirohydrochlorin (anaerobic route): step 6/10. Catalyzes the methylation of C-1 in cobalt-precorrin-5B to form cobalt-precorrin-6A. This is Cobalt-precorrin-5B C(1)-methyltransferase from Moorella thermoacetica (strain ATCC 39073 / JCM 9320).